Here is a 106-residue protein sequence, read N- to C-terminus: UPF0145 protein CPE0882 (106 aa).

This sequence belongs to the UPF0145 family.

This is UPF0145 protein CPE0882 from Clostridium perfringens (strain 13 / Type A).